Consider the following 337-residue polypeptide: Heat-inducible transcription repressor HrcA (337 aa).

Belongs to the HrcA family.

Its function is as follows. Negative regulator of class I heat shock genes (grpE-dnaK-dnaJ and groELS operons). Prevents heat-shock induction of these operons. The polypeptide is Heat-inducible transcription repressor HrcA (Metamycoplasma arthritidis (strain 158L3-1) (Mycoplasma arthritidis)).